Consider the following 448-residue polypeptide: Endoglucanase (448 aa).

An N-terminal signal peptide occupies residues 1-34 (MFSKIKKINFFKKTFSFLIAVVMMLFTVLGTNTY). Substrate contacts are provided by residues H70, 74 to 75 (WY), Y101, and H137. E175 functions as the Proton donor in the catalytic mechanism. Residue Y237 coordinates substrate. The active-site Nucleophile is E263. Substrate is bound by residues 269–270 (AS), W297, and 302–304 (KSE).

The protein belongs to the glycosyl hydrolase 5 (cellulase A) family.

The catalysed reaction is Endohydrolysis of (1-&gt;4)-beta-D-glucosidic linkages in cellulose, lichenin and cereal beta-D-glucans.. This Clostridium saccharobutylicum protein is Endoglucanase (eglA).